A 351-amino-acid polypeptide reads, in one-letter code: MVNDFNEKNGIKKRLLDFFPVVLEGIREILESMQYFPEETEKLLYSIKRNTLGGKNNRGLAVLQSLTSLINRELEEAEFRDAALLGWLIEILQGCFLMADDIMDQSIKRRGLDCWYLVVGVRRAINESQLLEACIPLLIRKYFRNMPYYVDLLDTFREVTFLTELGQQEDLLSSRDGEASLRSFDLMKYDFIITYKTSFYSFYLPIKCALLLSRNSNQKAYDTTIKLSKLLGYYFQVQDDYLDCFGDYTVLGKVGMDIQDNKCTWLVCYAEKFASADQLNLLRAHYGKAGSENIAVIKQLYHELQIPELYHKFEDDMVDSISKEIDLIDESTGLKKCIFTKFFQLIYKRSR.

Isopentenyl diphosphate-binding residues include lysine 55, arginine 58, and glutamine 93. Mg(2+) contacts are provided by aspartate 100 and aspartate 104. Arginine 109 contacts dimethylallyl diphosphate. Arginine 110 is a binding site for isopentenyl diphosphate. Residues lysine 196, threonine 197, glutamine 236, lysine 253, and lysine 262 each coordinate dimethylallyl diphosphate.

Belongs to the FPP/GGPP synthase family. Interacts with fps1. The cofactor is Mg(2+).

The protein resides in the cytoplasm. It localises to the nucleus. It carries out the reaction isopentenyl diphosphate + dimethylallyl diphosphate = (2E)-geranyl diphosphate + diphosphate. The enzyme catalyses isopentenyl diphosphate + (2E)-geranyl diphosphate = (2E,6E)-farnesyl diphosphate + diphosphate. It catalyses the reaction isopentenyl diphosphate + (2E,6E)-farnesyl diphosphate = (2E,6E,10E)-geranylgeranyl diphosphate + diphosphate. Its pathway is isoprenoid biosynthesis; farnesyl diphosphate biosynthesis; farnesyl diphosphate from geranyl diphosphate and isopentenyl diphosphate: step 1/1. The protein operates within isoprenoid biosynthesis; geranyl diphosphate biosynthesis; geranyl diphosphate from dimethylallyl diphosphate and isopentenyl diphosphate: step 1/1. It participates in isoprenoid biosynthesis; geranylgeranyl diphosphate biosynthesis; geranylgeranyl diphosphate from farnesyl diphosphate and isopentenyl diphosphate: step 1/1. Catalyzes the trans-addition of the 3 molecules of IPP onto DMAPP to form geranylgeranyl pyrophosphate. Required for the membrane attachment of ypt7 and rhb1. May be involved in vesicle trafficking and protein sorting. Required for forespore membrane formation. This chain is Geranylgeranyl pyrophosphate synthase (spo9), found in Schizosaccharomyces pombe (strain 972 / ATCC 24843) (Fission yeast).